A 22-amino-acid chain; its full sequence is Chlorate reductase subunit gamma (22 aa).

Positions Glu1 to Thr22 are disordered.

In terms of assembly, heterotrimer of alpha, beta and gamma subunits. It depends on heme b as a cofactor.

The protein localises to the cytoplasm. Functionally, may transfer electrons to the iron-sulfur centers of the beta subunit of chlorate reductase. This is Chlorate reductase subunit gamma from Stutzerimonas chloritidismutans (Pseudomonas chloritidismutans).